An 878-amino-acid polypeptide reads, in one-letter code: uncharacterized protein (878 aa).

Disordered regions lie at residues 58-223 (IGVD…RTKF), 306-494 (KGRL…TSSR), 585-652 (KLLE…SGKL), and 679-709 (PSSM…GGGG). Low complexity-rich tracts occupy residues 64–213 (NGNS…SGTS), 314–325 (SNSSQSSDSDYS), and 335–355 (IPNS…PNSN). Positions 362 to 372 (RNPNQLSSTNV) are enriched in polar residues. A compositionally biased stretch (low complexity) spans 373 to 494 (NNNINNSGGS…TPTTPVTSSR (122 aa)). Positions 585-595 (KLLEQQKEQQQ) are enriched in basic and acidic residues. Over residues 596-605 (KEQQQQQKQQ) the composition is skewed to low complexity. The segment covering 615-624 (TDDEDEDDDE) has biased composition (acidic residues). 2 stretches are compositionally biased toward low complexity: residues 639–652 (NLSN…SGKL) and 679–704 (PSSM…SSSS).

This is an uncharacterized protein from Dictyostelium discoideum (Social amoeba).